Here is a 321-residue protein sequence, read N- to C-terminus: tRNA(Ile)-lysidine synthase (321 aa).

30-35 (SGGSDS) contacts ATP.

Belongs to the tRNA(Ile)-lysidine synthase family.

The protein resides in the cytoplasm. It catalyses the reaction cytidine(34) in tRNA(Ile2) + L-lysine + ATP = lysidine(34) in tRNA(Ile2) + AMP + diphosphate + H(+). Functionally, ligates lysine onto the cytidine present at position 34 of the AUA codon-specific tRNA(Ile) that contains the anticodon CAU, in an ATP-dependent manner. Cytidine is converted to lysidine, thus changing the amino acid specificity of the tRNA from methionine to isoleucine. This Chlamydia trachomatis serovar A (strain ATCC VR-571B / DSM 19440 / HAR-13) protein is tRNA(Ile)-lysidine synthase.